We begin with the raw amino-acid sequence, 171 residues long: Adenine phosphoribosyltransferase (171 aa).

Belongs to the purine/pyrimidine phosphoribosyltransferase family. In terms of assembly, homodimer.

The protein localises to the cytoplasm. It carries out the reaction AMP + diphosphate = 5-phospho-alpha-D-ribose 1-diphosphate + adenine. It functions in the pathway purine metabolism; AMP biosynthesis via salvage pathway; AMP from adenine: step 1/1. Its function is as follows. Catalyzes a salvage reaction resulting in the formation of AMP, that is energically less costly than de novo synthesis. In Christiangramia forsetii (strain DSM 17595 / CGMCC 1.15422 / KT0803) (Gramella forsetii), this protein is Adenine phosphoribosyltransferase.